The following is a 501-amino-acid chain: Ribose import ATP-binding protein RbsA (501 aa).

ABC transporter domains are found at residues 5–241 and 252–495; these read LQLK…VGRK and APGE…VGKL. 37-44 is a binding site for ATP; that stretch reads GENGAGKS.

This sequence belongs to the ABC transporter superfamily. Ribose importer (TC 3.A.1.2.1) family. In terms of assembly, the complex is composed of an ATP-binding protein (RbsA), two transmembrane proteins (RbsC) and a solute-binding protein (RbsB).

Its subcellular location is the cell inner membrane. The catalysed reaction is D-ribose(out) + ATP + H2O = D-ribose(in) + ADP + phosphate + H(+). Part of the ABC transporter complex RbsABC involved in ribose import. Responsible for energy coupling to the transport system. This is Ribose import ATP-binding protein RbsA from Salmonella typhi.